Here is a 710-residue protein sequence, read N- to C-terminus: Dynein axonemal assembly factor 3 homolog (710 aa).

Residues 403 to 487 (GAEAGAGAGP…DSDPAAAAST (85 aa)) form a disordered region. A compositionally biased stretch (gly residues) spans 404-416 (AEAGAGAGPGGEA). Low complexity predominate over residues 417–438 (AAGASSSSGKEEAAAAAAAGKE). A compositionally biased stretch (gly residues) spans 453–462 (SGSGAPGAGT). A compositionally biased stretch (low complexity) spans 478-487 (DSDPAAAAST).

The protein belongs to the DNAAF3 family.

It is found in the cytoplasm. Functionally, required for the assembly of axonemal inner and outer dynein arms. Involved in preassembly of dyneins into complexes before their transport into cilia. The chain is Dynein axonemal assembly factor 3 homolog (DAB1) from Chlamydomonas reinhardtii (Chlamydomonas smithii).